The primary structure comprises 433 residues: uncharacterized protein (433 aa).

A signal peptide spans 1–28; that stretch reads MKICGLEKFRVFLSLISMVSLLCNGVNG. Residues 29–274 lie on the Extracellular side of the membrane; it reads FTIVRSMAVN…QAELEPKKTG (246 aa). The span at 235–250 shows a compositional bias: polar residues; it reads GENANPTANSGTSARS. The interval 235–266 is disordered; the sequence is GENANPTANSGTSARSNRNEQNKMEEPARNQA. Residues 251–266 are compositionally biased toward basic and acidic residues; the sequence is NRNEQNKMEEPARNQA. Residues 275-295 traverse the membrane as a helical segment; that stretch reads VVVAGVTVSLAAGFVLALATL. Residues 296 to 433 are Cytoplasmic-facing; sequence LLMKKKQTSL…HDKGTDEDKG (138 aa). Disordered stretches follow at residues 320-340 and 413-433; these read EEPVDSAGRPEQTATESPSFD and KVIEKTSNENSHDKGTDEDKG.

As to expression, component of the acid-insoluble and acid-soluble organic matrix of the aragonitic skeleton (at protein level).

It is found in the membrane. This is an uncharacterized protein from Acropora millepora (Staghorn coral).